The chain runs to 502 residues: Xyloglucan-specific endo-beta-1,4-glucanase BoGH5A (502 aa).

Residues 1–32 (MEKQSFSDGLFSPLGIKRVIFMLVLLTTSFIS) form the signal peptide. A lipid anchor (N-palmitoyl cysteine) is attached at C33. C33 is lipidated: S-diacylglycerol cysteine. Positions 67–127 (GPAEWHISTS…PDIIINVKQS (61 aa)) constitute a BACON domain. 4 residues coordinate substrate: N165, V172, H251, and N296. The Proton donor role is filled by E297. The active-site Nucleophile is the E430. W472 lines the substrate pocket.

This sequence belongs to the glycosyl hydrolase 5 (cellulase A) family.

It is found in the cell outer membrane. It catalyses the reaction xyloglucan + H2O = xyloglucan oligosaccharides.. Its pathway is glucan metabolism; xyloglucan degradation. In terms of biological role, catalyzes endohydrolysis of 1,4-beta-D-glucosidic linkages in xyloglucan with retention of the beta-configuration of the glycosyl residues in xyloglucan degradation. Cleaves the backbone of the 3 major types of natural xyloglucans (seed galactoxyloglucan from tamarind kernel, dicot fucogalactoxyloglucan from lettuce leaves, and solanaceous arabinogalactoxyloglucan from tomato fruit), to produce xyloglucan oligosaccharides. The sequence is that of Xyloglucan-specific endo-beta-1,4-glucanase BoGH5A from Bacteroides ovatus (strain ATCC 8483 / DSM 1896 / JCM 5824 / BCRC 10623 / CCUG 4943 / NCTC 11153).